Here is a 208-residue protein sequence, read N- to C-terminus: Small ribosomal subunit protein uS4 (208 aa).

Positions 95-157 constitute an S4 RNA-binding domain; the sequence is RRIDNVVYRA…DSLKKLIRSN (63 aa).

It belongs to the universal ribosomal protein uS4 family. As to quaternary structure, part of the 30S ribosomal subunit. Contacts protein S5. The interaction surface between S4 and S5 is involved in control of translational fidelity.

One of the primary rRNA binding proteins, it binds directly to 16S rRNA where it nucleates assembly of the body of the 30S subunit. Its function is as follows. With S5 and S12 plays an important role in translational accuracy. The sequence is that of Small ribosomal subunit protein uS4 from Borreliella burgdorferi (strain ATCC 35210 / DSM 4680 / CIP 102532 / B31) (Borrelia burgdorferi).